Reading from the N-terminus, the 280-residue chain is Large ribosomal subunit protein uL2 (280 aa).

Disordered regions lie at residues 1 to 47 (MAIR…NVHG) and 224 to 280 (VVMN…SKKR). Residues 23–33 (EITRSTPEKSL) are compositionally biased toward basic and acidic residues. Residues 37–47 (LPKKGGRNVHG) are compositionally biased toward basic residues. A compositionally biased stretch (polar residues) spans 258–268 (RNPNRYSNNMI). The segment covering 270–280 (QRRRTNKSKKR) has biased composition (basic residues).

This sequence belongs to the universal ribosomal protein uL2 family. As to quaternary structure, part of the 50S ribosomal subunit. Forms a bridge to the 30S subunit in the 70S ribosome.

Its function is as follows. One of the primary rRNA binding proteins. Required for association of the 30S and 50S subunits to form the 70S ribosome, for tRNA binding and peptide bond formation. It has been suggested to have peptidyltransferase activity; this is somewhat controversial. Makes several contacts with the 16S rRNA in the 70S ribosome. The chain is Large ribosomal subunit protein uL2 from Corynebacterium diphtheriae (strain ATCC 700971 / NCTC 13129 / Biotype gravis).